Consider the following 118-residue polypeptide: Basic leucine zipper transcriptional factor ATF-like 3 (118 aa).

The interval 1 to 69 (MSQGPPAVSV…HESLEQENSV (69 aa)) is disordered. 2 positions are modified to phosphoserine: S2 and S24. Positions 28 to 91 (DDRKVRRREK…RHLSEVLKEH (64 aa)) constitute a bZIP domain. The tract at residues 30–55 (RKVRRREKNRVAAQRSRKKQTQKADK) is basic motif. Residues 51–69 (QKADKLHEEHESLEQENSV) are compositionally biased toward basic and acidic residues. Residues 56 to 84 (LHEEHESLEQENSVLRREISKLKEELRHL) are leucine-zipper.

It belongs to the bZIP family. As to quaternary structure, heterodimer; heterodimerizes with JUN family proteins. Interacts with JUN. Highly expressed in CD8-alpha(+) classical dendritic cells (cDCs), with low to absent expression in other immune cells and non-immune tissues.

It is found in the nucleus. Functionally, AP-1 family transcription factor that controls the differentiation of CD8(+) thymic conventional dendritic cells in the immune system. Acts via the formation of a heterodimer with JUN family proteins that recognizes and binds DNA sequence 5'-TGA[CG]TCA-3' and regulates expression of target genes. Required for development of CD8-alpha(+) classical dendritic cells (cDCs) and related CD103(+) dendritic cells that cross-present antigens to CD8 T-cells and produce interleukin-12 (IL12) in response to pathogens. This is Basic leucine zipper transcriptional factor ATF-like 3 (Batf3) from Mus musculus (Mouse).